An 848-amino-acid chain; its full sequence is Neprilysin-11 (848 aa).

At 1–74 (MPFGNDPPDY…WWKSRTTMEK (74 aa)) the chain is on the cytoplasmic side. Residues 75–95 (LLLPVLLLFCLLTAVLLAVII) traverse the membrane as a helical; Signal-anchor for type II membrane protein segment. Topologically, residues 96-848 (NTDKRIEAMK…VNPDHKCIVW (753 aa)) are extracellular. Residues 108-161 (HATQTEHAGFGDPTENPTKTAEDPRVPPIVPEAPTSPEPEVTTSTEKPKEPEVC) form a disordered region. The segment covering 133–144 (VPPIVPEAPTSP) has biased composition (pro residues). Residues 160-848 (VCSTPGCVRA…VNPDHKCIVW (689 aa)) enclose the Peptidase M13 domain. Cys161 and Cys166 are joined by a disulfide. Residues Asn178, Asn249, Asn284, Asn312, Asn337, Asn364, Asn398, and Asn438 are each glycosylated (N-linked (GlcNAc...) asparagine). Intrachain disulfides connect Cys184-Cys833, Cys192-Cys793, Cys247-Cys509, and Cys719-Cys845. A Zn(2+)-binding site is contributed by His682. Residue Glu683 is part of the active site. His686 provides a ligand contact to Zn(2+). Asn726 carries N-linked (GlcNAc...) asparagine glycosylation. Position 744 (Glu744) interacts with Zn(2+). Asp748 serves as the catalytic Proton donor.

Belongs to the peptidase M13 family. The cofactor is Zn(2+).

It localises to the cell membrane. Probable cell surface protease. The protein is Neprilysin-11 (nep-11) of Caenorhabditis elegans.